The chain runs to 481 residues: DNA primase DnaG (481 aa).

In terms of domain architecture, Toprim spans 169 to 243 (DAILVVEGRA…DVDYVARAPD (75 aa)). Glutamate 175, aspartate 217, and aspartate 219 together coordinate Mg(2+). The interval 275–393 (RRRNKLAAQA…ARKEREPSEF (119 aa)) is disordered. Low complexity predominate over residues 281–309 (AAQAAEKQAQAEAAQKAEAPAAAAPVQPQ). Over residues 312–393 (YQQKEYPQRE…ARKEREPSEF (82 aa)) the composition is skewed to basic and acidic residues.

It belongs to the archaeal DnaG primase family. As to quaternary structure, forms a ternary complex with MCM helicase and DNA. Component of the archaeal exosome complex. Mg(2+) serves as cofactor.

It catalyses the reaction ssDNA + n NTP = ssDNA/pppN(pN)n-1 hybrid + (n-1) diphosphate.. Functionally, RNA polymerase that catalyzes the synthesis of short RNA molecules used as primers for DNA polymerase during DNA replication. Also part of the exosome, which is a complex involved in RNA degradation. Acts as a poly(A)-binding protein that enhances the interaction between heteromeric, adenine-rich transcripts and the exosome. The protein is DNA primase DnaG of Methanocella arvoryzae (strain DSM 22066 / NBRC 105507 / MRE50).